We begin with the raw amino-acid sequence, 88 residues long: Small ribosomal subunit protein bS20 (88 aa).

This sequence belongs to the bacterial ribosomal protein bS20 family.

Its function is as follows. Binds directly to 16S ribosomal RNA. This chain is Small ribosomal subunit protein bS20, found in Bacillus licheniformis (strain ATCC 14580 / DSM 13 / JCM 2505 / CCUG 7422 / NBRC 12200 / NCIMB 9375 / NCTC 10341 / NRRL NRS-1264 / Gibson 46).